The sequence spans 863 residues: Paramyosin (863 aa).

The interval 1–18 (MSESHVKISRTIIRGTSP) is nonhelical region. Residues 19 to 836 (STVRLESRVR…ERTITIKRTI (818 aa)) adopt a coiled-coil conformation. The segment at 837–863 (GGPGSRAVSVVREINSVSRGNRATSIM) is nonhelical region.

This sequence belongs to the paramyosin family. As to quaternary structure, homodimer or monomer in secreted form.

It is found in the cytoplasm. Its subcellular location is the myofibril. It localises to the secreted. In terms of biological role, paramyosin is a major structural component of many thick filaments isolated from invertebrate muscles. It is a prominent antigen in human cysticercosis, may have a role as a modulator of the host immune response. It is able to bind collagen and has complement inhibitor activity. The protein is Paramyosin (PMY) of Taenia solium (Pork tapeworm).